We begin with the raw amino-acid sequence, 560 residues long: Muellerian-inhibiting factor (560 aa).

An N-terminal signal peptide occupies residues 1–24 (MRDLPLTSLALVLSALGALLGTEA). Residues 25–451 (LRAEEPAVGT…DPRGPGRAQR (427 aa)) constitute a propeptide that is removed on maturation. N-linked (GlcNAc...) asparagine glycosylation occurs at Asn-64. Residues 259-287 (PLPAHGQLDTVPFPPPRPSAELEESPPSA) are disordered. The N-linked (GlcNAc...) asparagine glycan is linked to Asn-329. Disulfide bonds link Cys-462/Cys-526, Cys-488/Cys-557, and Cys-492/Cys-559.

This sequence belongs to the TGF-beta family. In terms of assembly, homodimer; disulfide-linked. Preproprotein is proteolytically processed to generate N- and C-terminal cleavage products that homodimerize and associate to form a biologically active non-covalent complex. Binding of the non-covalent complex to AMHR2 induces dissociation of the pro-region from the mature C-terminal dimer. The N-terminal portion of the protein, despite having no intrinsic activity, has the role of amplifying the activity of the C-terminus. As to expression, in ovaries, AMH is detected in granulosa cells of early growing follicles.

The protein localises to the secreted. Functionally, plays an important role in several reproductive functions. Induces Muellerian duct regression during male fetal sexual differentiation. Also plays a role in Leydig cell differentiation and function. In female acts as a negative regulator of the primordial to primary follicle transition and decreases FSH sensitivity of growing follicles. AMH signals by binding to a specific type-II receptor, AMHR2, that heterodimerizes with type-I receptors (ACVR1 and BMPR1A), and recruiting SMAD proteins that are translocated to the nucleus to regulate target gene expression. This chain is Muellerian-inhibiting factor, found in Homo sapiens (Human).